A 1096-amino-acid chain; its full sequence is DNA-directed RNA polymerase subunit beta (1096 aa).

Positions 1069 to 1096 are disordered; sequence DLMQDVNPRRSTPSRPTYESLGSDYQED.

The protein belongs to the RNA polymerase beta chain family. In terms of assembly, in cyanobacteria the RNAP catalytic core is composed of 2 alpha, 1 beta, 1 beta', 1 gamma and 1 omega subunit. When a sigma factor is associated with the core the holoenzyme is formed, which can initiate transcription.

It carries out the reaction RNA(n) + a ribonucleoside 5'-triphosphate = RNA(n+1) + diphosphate. DNA-dependent RNA polymerase catalyzes the transcription of DNA into RNA using the four ribonucleoside triphosphates as substrates. In Prochlorococcus marinus (strain SARG / CCMP1375 / SS120), this protein is DNA-directed RNA polymerase subunit beta.